A 457-amino-acid chain; its full sequence is Ribosomal protein uS12 methylthiotransferase RimO (457 aa).

Residues 30–140 (PTIGMVSLGC…VLDAVHGAVP (111 aa)) form the MTTase N-terminal domain. [4Fe-4S] cluster-binding residues include Cys39, Cys75, Cys104, Cys171, Cys175, and Cys178. Residues 157–386 (LTPRHFSYLK…MQKAQAISEA (230 aa)) enclose the Radical SAM core domain. Positions 389–456 (AARIGQRLEV…EYDLWGRAVL (68 aa)) constitute a TRAM domain.

Belongs to the methylthiotransferase family. RimO subfamily. Requires [4Fe-4S] cluster as cofactor.

The protein resides in the cytoplasm. It catalyses the reaction L-aspartate(89)-[ribosomal protein uS12]-hydrogen + (sulfur carrier)-SH + AH2 + 2 S-adenosyl-L-methionine = 3-methylsulfanyl-L-aspartate(89)-[ribosomal protein uS12]-hydrogen + (sulfur carrier)-H + 5'-deoxyadenosine + L-methionine + A + S-adenosyl-L-homocysteine + 2 H(+). Functionally, catalyzes the methylthiolation of an aspartic acid residue of ribosomal protein uS12. The chain is Ribosomal protein uS12 methylthiotransferase RimO from Cereibacter sphaeroides (strain ATCC 17025 / ATH 2.4.3) (Rhodobacter sphaeroides).